The following is a 91-amino-acid chain: Acylphosphatase (91 aa).

An Acylphosphatase-like domain is found at 3–89 (AKHLILSGRV…PAEPGFVKRA (87 aa)). Active-site residues include arginine 18 and asparagine 36.

This sequence belongs to the acylphosphatase family.

It catalyses the reaction an acyl phosphate + H2O = a carboxylate + phosphate + H(+). This is Acylphosphatase (acyP) from Acidiphilium cryptum (strain JF-5).